The sequence spans 344 residues: tRNA N6-adenosine threonylcarbamoyltransferase (344 aa).

His-111 and His-115 together coordinate Fe cation. Substrate contacts are provided by residues 134–138, Asp-167, Gly-180, and Asn-277; that span reads LVSGG. Asp-305 serves as a coordination point for Fe cation.

This sequence belongs to the KAE1 / TsaD family. Fe(2+) is required as a cofactor.

It localises to the cytoplasm. It carries out the reaction L-threonylcarbamoyladenylate + adenosine(37) in tRNA = N(6)-L-threonylcarbamoyladenosine(37) in tRNA + AMP + H(+). Required for the formation of a threonylcarbamoyl group on adenosine at position 37 (t(6)A37) in tRNAs that read codons beginning with adenine. Is involved in the transfer of the threonylcarbamoyl moiety of threonylcarbamoyl-AMP (TC-AMP) to the N6 group of A37, together with TsaE and TsaB. TsaD likely plays a direct catalytic role in this reaction. The polypeptide is tRNA N6-adenosine threonylcarbamoyltransferase (Glaesserella parasuis serovar 5 (strain SH0165) (Haemophilus parasuis)).